The primary structure comprises 437 residues: GTPase Obg (437 aa).

Residues 2-160 form the Obg domain; that stretch reads SLFLDTARIE…KILLLELRVL (159 aa). The region spanning 161–338 is the OBG-type G domain; that stretch reads ADVGLVGFPS…LLARTSELLA (178 aa). Residues 167-174, 192-196, 214-217, 284-287, and 319-321 contribute to the GTP site; these read GFPSVGKS, FTTIT, DMPG, NKMD, and SGL. 2 residues coordinate Mg(2+): serine 174 and threonine 194. One can recognise an OCT domain in the interval 359 to 437; it reads GFEDEEKPFK…IQKFEFEFVD (79 aa).

It belongs to the TRAFAC class OBG-HflX-like GTPase superfamily. OBG GTPase family. Monomer. Mg(2+) serves as cofactor.

Its subcellular location is the cytoplasm. Its function is as follows. An essential GTPase which binds GTP, GDP and possibly (p)ppGpp with moderate affinity, with high nucleotide exchange rates and a fairly low GTP hydrolysis rate. Plays a role in control of the cell cycle, stress response, ribosome biogenesis and in those bacteria that undergo differentiation, in morphogenesis control. This is GTPase Obg from Lactococcus lactis subsp. cremoris (strain SK11).